The following is a 289-amino-acid chain: Probable endonuclease 4 (289 aa).

Zn(2+) is bound by residues histidine 74, histidine 115, glutamate 150, aspartate 184, histidine 187, histidine 218, aspartate 231, histidine 233, and glutamate 263.

It belongs to the AP endonuclease 2 family. Zn(2+) serves as cofactor.

The catalysed reaction is Endonucleolytic cleavage to 5'-phosphooligonucleotide end-products.. Its function is as follows. Endonuclease IV plays a role in DNA repair. It cleaves phosphodiester bonds at apurinic or apyrimidinic (AP) sites, generating a 3'-hydroxyl group and a 5'-terminal sugar phosphate. This Mycoplasma capricolum subsp. capricolum (strain California kid / ATCC 27343 / NCTC 10154) protein is Probable endonuclease 4.